Consider the following 488-residue polypeptide: Prostaglandin E2 receptor EP4 subtype (488 aa).

Topologically, residues methionine 1–asparagine 19 are extracellular. Asparagine 7 carries N-linked (GlcNAc...) asparagine glycosylation. Residues proline 20–cysteine 43 form a helical membrane-spanning segment. Residues lysine 44 to tyrosine 55 are Cytoplasmic-facing. A helical membrane pass occupies residues threonine 56–threonine 79. Over tyrosine 80–threonine 96 the chain is Extracellular. Cysteines 92 and 170 form a disulfide. The chain crosses the membrane as a helical span at residues phenylalanine 97–isoleucine 115. Residues glutamate 116–leucine 135 lie on the Cytoplasmic side of the membrane. A helical membrane pass occupies residues alanine 136–arginine 160. Topologically, residues serine 161–phenylalanine 184 are extracellular. N-linked (GlcNAc...) asparagine glycosylation occurs at asparagine 177. The helical transmembrane segment at serine 185 to leucine 211 threads the bilayer. The Cytoplasmic segment spans residues arginine 212–glutamate 270. The helical transmembrane segment at isoleucine 271–asparagine 298 threads the bilayer. The Extracellular segment spans residues glutamine 299–leucine 315. A helical membrane pass occupies residues glutamine 316–leucine 335. Residues arginine 336 to isoleucine 488 lie on the Cytoplasmic side of the membrane. Over residues arginine 358–arginine 371 the composition is skewed to basic and acidic residues. The tract at residues arginine 358–arginine 381 is disordered. Positions threonine 372–arginine 381 are enriched in polar residues. Residues serine 377, serine 380, serine 382, and serine 385 each carry the phosphoserine modification. The segment at glutamate 456–threonine 475 is disordered.

It belongs to the G-protein coupled receptor 1 family. In terms of assembly, interacts with FEM1A. In terms of processing, phosphorylation mediates agonist-mediated desensitization by promoting cytoplasmic retention. In terms of tissue distribution, highly expressed in intestine, duodenal epithelium, uterus, thymus and adrenal cortex. Lower but significant expression in whole adrenal, lung, spleen, stomach, and kidney. In this latter organ, the receptor is localized in the glomeruli and the transitional epithelium of the renal calyx.

It is found in the cell membrane. Functionally, receptor for prostaglandin E2 (PGE2). The activity of this receptor is mediated by G(s) proteins that stimulate adenylate cyclase. Has a relaxing effect on smooth muscle. May play an important role in regulating renal hemodynamics, intestinal epithelial transport, adrenal aldosterone secretion, and uterine function. The chain is Prostaglandin E2 receptor EP4 subtype (PTGER4) from Oryctolagus cuniculus (Rabbit).